Here is a 207-residue protein sequence, read N- to C-terminus: 8-oxoguanine DNA glycosylase/AP lyase (207 aa).

Residues Lys128 and Asp146 contribute to the active site.

Belongs to the type-2 OGG1 family.

The catalysed reaction is 2'-deoxyribonucleotide-(2'-deoxyribose 5'-phosphate)-2'-deoxyribonucleotide-DNA = a 3'-end 2'-deoxyribonucleotide-(2,3-dehydro-2,3-deoxyribose 5'-phosphate)-DNA + a 5'-end 5'-phospho-2'-deoxyribonucleoside-DNA + H(+). Catalyzes the excision of an oxidatively damaged form of guanine (7,8-dihydro-8-oxoguanine = 8-oxoG) from DNA. Also cleaves the DNA backbone at apurinic/apyrimidinic sites (AP sites). The protein is 8-oxoguanine DNA glycosylase/AP lyase of Saccharolobus islandicus (strain L.S.2.15 / Lassen #1) (Sulfolobus islandicus).